We begin with the raw amino-acid sequence, 219 residues long: ATP-dependent Clp protease proteolytic subunit 1, mitochondrial (219 aa).

The transit peptide at 1–23 (MLRRILTTSSVRNLTSSTQARVG) directs the protein to the mitochondrion. Serine 118 acts as the Nucleophile in catalysis. Residue histidine 143 is part of the active site.

This sequence belongs to the peptidase S14 family. As to quaternary structure, tetradecamer that assembles into a two heptameric rings with a central cavity.

It localises to the mitochondrion matrix. It carries out the reaction Hydrolysis of proteins to small peptides in the presence of ATP and magnesium. alpha-casein is the usual test substrate. In the absence of ATP, only oligopeptides shorter than five residues are hydrolyzed (such as succinyl-Leu-Tyr-|-NHMec, and Leu-Tyr-Leu-|-Tyr-Trp, in which cleavage of the -Tyr-|-Leu- and -Tyr-|-Trp bonds also occurs).. Clp cleaves peptides in various proteins in a process that requires ATP hydrolysis. Clp may be responsible for a fairly general and central housekeeping function rather than for the degradation of specific substrates. This is ATP-dependent Clp protease proteolytic subunit 1, mitochondrial from Caenorhabditis briggsae.